Here is a 178-residue protein sequence, read N- to C-terminus: Tetratricopeptide repeat protein 9C (178 aa).

TPR repeat units lie at residues 15 to 48 (ASSF…LRSL), 79 to 114 (ADCY…QPEN), and 115 to 148 (VKAL…APKD).

The protein belongs to the TTC9 family.

The chain is Tetratricopeptide repeat protein 9C (ttc9c) from Xenopus tropicalis (Western clawed frog).